The following is an 875-amino-acid chain: Neurotrypsin (875 aa).

The N-terminal stretch at 1–20 is a signal peptide; sequence MTLARFALALLFGVLPEVVG. Residue asparagine 26 is glycosylated (N-linked (GlcNAc...) asparagine). The tract at residues 51-72 is disordered; sequence QRHRRTRPPPPLPRFPRPPRAL. Residues 58-71 are compositionally biased toward pro residues; sequence PPPPLPRFPRPPRA. A Kringle domain is found at 93–165; sequence CPAGEPWVSV…GKVDWGYCDC (73 aa). Disulfide bonds link cysteine 93-cysteine 165, cysteine 109-cysteine 149, cysteine 138-cysteine 163, cysteine 195-cysteine 259, cysteine 208-cysteine 269, cysteine 239-cysteine 249, cysteine 305-cysteine 369, cysteine 318-cysteine 379, cysteine 349-cysteine 359, cysteine 412-cysteine 475, cysteine 425-cysteine 485, cysteine 455-cysteine 465, cysteine 525-cysteine 589, cysteine 538-cysteine 599, cysteine 569-cysteine 579, cysteine 619-cysteine 750, cysteine 661-cysteine 677, cysteine 765-cysteine 831, cysteine 794-cysteine 808, and cysteine 821-cysteine 850. SRCR domains are found at residues 170–271, 280–381, 387–487, and 500–601; these read VRLR…MCSF, IRLV…SCTP, IRLA…ACYP, and VRLM…ICDY. Residues 619 to 630 are zymogen activation region; it reads CGLRLLHRRQKR. The region spanning 631 to 874 is the Peptidase S1 domain; sequence IIGGKNSLRG…FVPWIKSVTK (244 aa). Histidine 676 acts as the Charge relay system in catalysis. N-linked (GlcNAc...) asparagine glycosylation is present at asparagine 683. Aspartate 726 serves as the catalytic Charge relay system. The active-site Charge relay system is the serine 825.

Belongs to the peptidase S1 family.

The protein resides in the secreted. Its function is as follows. Plays a role in neuronal plasticity and the proteolytic action may subserve structural reorganizations associated with learning and memory operations. The sequence is that of Neurotrypsin (PRSS12) from Saguinus labiatus (Red-chested mustached tamarin).